The primary structure comprises 104 residues: Pyrimidine/purine nucleoside phosphorylase (104 aa).

Belongs to the nucleoside phosphorylase PpnP family.

It carries out the reaction a purine D-ribonucleoside + phosphate = a purine nucleobase + alpha-D-ribose 1-phosphate. The catalysed reaction is adenosine + phosphate = alpha-D-ribose 1-phosphate + adenine. It catalyses the reaction cytidine + phosphate = cytosine + alpha-D-ribose 1-phosphate. The enzyme catalyses guanosine + phosphate = alpha-D-ribose 1-phosphate + guanine. It carries out the reaction inosine + phosphate = alpha-D-ribose 1-phosphate + hypoxanthine. The catalysed reaction is thymidine + phosphate = 2-deoxy-alpha-D-ribose 1-phosphate + thymine. It catalyses the reaction uridine + phosphate = alpha-D-ribose 1-phosphate + uracil. The enzyme catalyses xanthosine + phosphate = alpha-D-ribose 1-phosphate + xanthine. Functionally, catalyzes the phosphorolysis of diverse nucleosides, yielding D-ribose 1-phosphate and the respective free bases. Can use uridine, adenosine, guanosine, cytidine, thymidine, inosine and xanthosine as substrates. Also catalyzes the reverse reactions. This chain is Pyrimidine/purine nucleoside phosphorylase, found in Janthinobacterium sp. (strain Marseille) (Minibacterium massiliensis).